Consider the following 698-residue polypeptide: Phenylalanine aminomutase (L-beta-phenylalanine forming) (698 aa).

Y80 functions as the Proton donor/acceptor in the catalytic mechanism. A cross-link (5-imidazolinone (Ala-Gly)) is located at residues 175–177 (ASG). Position 176 is a 2,3-didehydroalanine (Ser) (S176). The (E)-cinnamate site is built by N231, Q319, R325, N355, K427, E455, and N458.

It belongs to the PAL/histidase family. Homotetramer. Contains an active site 4-methylidene-imidazol-5-one (MIO), which is formed autocatalytically by cyclization and dehydration of residues Ala-Ser-Gly.

The protein localises to the cytoplasm. The enzyme catalyses L-phenylalanine = L-beta-phenylalanine. The catalysed reaction is L-phenylalanine = (E)-cinnamate + NH4(+). It participates in alkaloid biosynthesis; taxol biosynthesis. It functions in the pathway phenylpropanoid metabolism; trans-cinnamate biosynthesis; trans-cinnamate from L-phenylalanine: step 1/1. Functionally, phenylalanine aminomutase that catalyzes the rearrangement of L-phenylalanine to R-beta-phenylalanine. Catalyzes the first committed step in the biosynthesis of the side chain of the alkaloid taxol (paclitaxel), a widely-used compound with antitumor activity. Also has low phenylalanine ammonia-lyase activity. The protein is Phenylalanine aminomutase (L-beta-phenylalanine forming) (pam) of Taxus canadensis (Canadian yew).